A 117-amino-acid chain; its full sequence is Minor capsid protein p17 (117 aa).

Residue Asn-12 is glycosylated (N-linked (GlcNAc...) asparagine; by host). The chain crosses the membrane as a helical span at residues 39-59 (AIILGILILLVIILIIVAIVY). 2 N-linked (GlcNAc...) asparagine; by host glycosylation sites follow: Asn-61 and Asn-97.

This sequence belongs to the asfivirus minor capsid protein p17 family. In terms of assembly, interacts with the minor capsid protein M1249L and with the hexon capsid protein p72 capsomers; these interactions form a rigid zipper structure that stabilizes the capsomers. Interacts with host STING1.

The protein localises to the virion membrane. It localises to the host endoplasmic reticulum membrane. Functionally, together with the penton and the other minor capsid proteins (M1249L, p49), forms a complicated network immediately below the outer capsid shell, stabilizing the whole capsid. Three copies of p17 encircle each p72 capsomer in the inner capsid shell, anchoring p72 capsomers on the inner membrane. Required for the assembly of the capsid and icosahedral morphogenesis. Additionally, inhibits the host cGAS-STING pathway through its interaction with STING1 and subsequent interference of the recruitment of downstream components TBK1 and IKBKE. This is Minor capsid protein p17 from Ornithodoros (relapsing fever ticks).